The following is a 203-amino-acid chain: Large ribosomal subunit protein bL25 (203 aa).

This sequence belongs to the bacterial ribosomal protein bL25 family. CTC subfamily. In terms of assembly, part of the 50S ribosomal subunit; part of the 5S rRNA/L5/L18/L25 subcomplex. Contacts the 5S rRNA. Binds to the 5S rRNA independently of L5 and L18.

Functionally, this is one of the proteins that binds to the 5S RNA in the ribosome where it forms part of the central protuberance. The protein is Large ribosomal subunit protein bL25 of Pseudomonas savastanoi pv. phaseolicola (strain 1448A / Race 6) (Pseudomonas syringae pv. phaseolicola (strain 1448A / Race 6)).